Here is a 459-residue protein sequence, read N- to C-terminus: Bifunctional protein GlmU (459 aa).

The interval 1–228 (MNFKAIILAA…IEELMGVNSR (228 aa)) is pyrophosphorylase. Residues 8–11 (LAAG), K22, Q72, and 77–78 (GT) each bind UDP-N-acetyl-alpha-D-glucosamine. D101 provides a ligand contact to Mg(2+). UDP-N-acetyl-alpha-D-glucosamine is bound by residues G138, E153, N168, and N226. N226 contributes to the Mg(2+) binding site. The linker stretch occupies residues 229–249 (VELSKAEEIMRRRINESHMVN). The segment at 250–459 (GVTIIDTNST…KKNQKDDQSK (210 aa)) is N-acetyltransferase. Residues R331 and K349 each coordinate UDP-N-acetyl-alpha-D-glucosamine. The active-site Proton acceptor is H361. Residues Y364 and N375 each contribute to the UDP-N-acetyl-alpha-D-glucosamine site. Residues 384–385 (NY), S403, T421, and R438 each bind acetyl-CoA.

In the N-terminal section; belongs to the N-acetylglucosamine-1-phosphate uridyltransferase family. The protein in the C-terminal section; belongs to the transferase hexapeptide repeat family. In terms of assembly, homotrimer. Requires Mg(2+) as cofactor.

It localises to the cytoplasm. It carries out the reaction alpha-D-glucosamine 1-phosphate + acetyl-CoA = N-acetyl-alpha-D-glucosamine 1-phosphate + CoA + H(+). The enzyme catalyses N-acetyl-alpha-D-glucosamine 1-phosphate + UTP + H(+) = UDP-N-acetyl-alpha-D-glucosamine + diphosphate. Its pathway is nucleotide-sugar biosynthesis; UDP-N-acetyl-alpha-D-glucosamine biosynthesis; N-acetyl-alpha-D-glucosamine 1-phosphate from alpha-D-glucosamine 6-phosphate (route II): step 2/2. It functions in the pathway nucleotide-sugar biosynthesis; UDP-N-acetyl-alpha-D-glucosamine biosynthesis; UDP-N-acetyl-alpha-D-glucosamine from N-acetyl-alpha-D-glucosamine 1-phosphate: step 1/1. It participates in bacterial outer membrane biogenesis; LPS lipid A biosynthesis. Its function is as follows. Catalyzes the last two sequential reactions in the de novo biosynthetic pathway for UDP-N-acetylglucosamine (UDP-GlcNAc). The C-terminal domain catalyzes the transfer of acetyl group from acetyl coenzyme A to glucosamine-1-phosphate (GlcN-1-P) to produce N-acetylglucosamine-1-phosphate (GlcNAc-1-P), which is converted into UDP-GlcNAc by the transfer of uridine 5-monophosphate (from uridine 5-triphosphate), a reaction catalyzed by the N-terminal domain. The polypeptide is Bifunctional protein GlmU (Clostridioides difficile (strain 630) (Peptoclostridium difficile)).